The chain runs to 207 residues: Large ribosomal subunit protein uL4 (207 aa).

The disordered stretch occupies residues 43-80; that stretch reads RRRSGTAKSKGRSEVSGSTRKLYRQKGTGNARSGSVKS. The segment covering 69–78 has biased composition (polar residues); that stretch reads GTGNARSGSV.

Belongs to the universal ribosomal protein uL4 family. Part of the 50S ribosomal subunit.

Functionally, one of the primary rRNA binding proteins, this protein initially binds near the 5'-end of the 23S rRNA. It is important during the early stages of 50S assembly. It makes multiple contacts with different domains of the 23S rRNA in the assembled 50S subunit and ribosome. Forms part of the polypeptide exit tunnel. This chain is Large ribosomal subunit protein uL4, found in Desulforapulum autotrophicum (strain ATCC 43914 / DSM 3382 / VKM B-1955 / HRM2) (Desulfobacterium autotrophicum).